Consider the following 1838-residue polypeptide: Collagen alpha-1(V) chain (1838 aa).

An N-terminal signal peptide occupies residues 1–37 (MDVHTRWKARSALRPGAPLLPPLLLLLLWAPPPSRAA). In terms of domain architecture, Laminin G-like spans 72-244 (DVAYRVTKDA…DYCEHYSPDC (173 aa)). Residues 231-443 (RAAYDYCEHY…MPANQDTIYE (213 aa)) are nonhelical region. A sulfotyrosine mark is found at Tyr-234, Tyr-236, Tyr-240, Tyr-262, and Tyr-263. Disordered stretches follow at residues 242 to 269 (PDCDTAVPDTPQSQDPNPDEYYTEGDGE), 281 to 457 (EDPE…QKGE), 470 to 520 (PPGP…GTML), 526 to 545 (FGGGGDAGSKGPMVSAQESQ), and 559 to 1574 (GPAG…EVIQ). Residues 258 to 269 (NPDEYYTEGDGE) are compositionally biased toward acidic residues. Residues 285–304 (DLGKEPTPSKKPVEAAKETT) are compositionally biased toward basic and acidic residues. Residues 309-323 (ELTPTPTEAAPMPET) show a composition bias toward low complexity. Sulfotyrosine occurs at positions 338, 340, 346, and 347. Positions 377–388 (PTSTADTSNSSN) are enriched in polar residues. Acidic residues predominate over residues 396-406 (GADDLEGEFTE). Sulfotyrosine is present on residues Tyr-416, Tyr-417, Tyr-420, and Tyr-421. The span at 417–428 (YDPYYDPTSSPS) shows a compositional bias: low complexity. The interrupted collagenous region stretch occupies residues 444–558 (GIGGPRGEKG…ILQQARLALR (115 aa)). Over residues 470–485 (PPGPEGPAGLPGPPGT) the composition is skewed to pro residues. Residues 506–520 (LPGADGLPGPPGTML) show a composition bias toward low complexity. The tract at residues 559 to 1570 (GPAGPMGLTG…GPPGPPGPPG (1012 aa)) is triple-helical region. 2 positions are modified to hydroxyproline: Pro-570 and Pro-576. Positions 587 to 597 (DVGPQGPRGVQ) are enriched in low complexity. Pro-621 carries the hydroxyproline modification. Position 627 is a 5-hydroxylysine (Lys-627). Pro-639 carries the hydroxyproline modification. Lys-642 carries the 5-hydroxylysine modification. Hydroxyproline occurs at positions 648, 654, 657, 675, and 678. The span at 671-686 (PRGLPGEPGPRGLLGP) shows a compositional bias: low complexity. Position 687 is a 5-hydroxylysine (Lys-687). Residues 687-696 (KGPPGPPGPP) show a composition bias toward pro residues. Hydroxyproline is present on residues Pro-690, Pro-696, and Pro-705. Lys-708 bears the 5-hydroxylysine mark. Hydroxyproline occurs at positions 717, 720, 726, and 732. The span at 722–741 (QQGNPGAQGLPGPQGAIGPP) shows a compositional bias: low complexity. A 5-hydroxylysine modification is found at Lys-744. Positions 747–756 (LGKPGLPGMP) are enriched in low complexity. Hydroxyproline is present on residues Pro-750, Pro-756, Pro-762, Pro-765, and Pro-771. At Lys-774 the chain carries 5-hydroxylysine. Hydroxyproline is present on residues Pro-780 and Pro-789. 5-hydroxylysine is present on residues Lys-795, Lys-804, Lys-807, and Lys-810. The residue at position 816 (Pro-816) is a Hydroxyproline. 5-hydroxylysine is present on Lys-819. Pro-834 bears the Hydroxyproline mark. Positions 837-846 (RGEDGPEGPK) are enriched in basic and acidic residues. A 5-hydroxylysine modification is found at Lys-846. Pro-861 bears the Hydroxyproline mark. Lys-864 carries the 5-hydroxylysine modification. A compositionally biased stretch (low complexity) spans 867–876 (LGVPGLPGYP). Hydroxyproline occurs at positions 870, 873, and 876. Lys-882 carries the post-translational modification 5-hydroxylysine. Residues Pro-888 and Pro-891 each carry the hydroxyproline modification. The residue at position 897 (Lys-897) is a 5-hydroxylysine. Residues Pro-903 and Pro-906 each carry the hydroxyproline modification. The segment covering 908-917 (PRGQRGPTGP) has biased composition (low complexity). A hydroxyproline mark is found at Pro-930 and Pro-945. Low complexity-rich tracts occupy residues 971-990 (KDGLPGHPGQRGETGFQGKT) and 999-1011 (VGPQGPTGETGPM). Hydroxyproline is present on residues Pro-1017, Pro-1020, Pro-1023, and Pro-1029. A compositionally biased stretch (low complexity) spans 1088–1104 (SPGERGPAGAAGPIGIP). Residues 1106–1115 (RPGPQGPPGP) show a composition bias toward pro residues. Residues 1116–1140 (AGEKGAPGEKGPQGPAGRDGLQGPV) show a composition bias toward low complexity. Hydroxyproline occurs at positions 1221 and 1224. Over residues 1259-1268 (PSGAPGADGP) the composition is skewed to low complexity. Pro residues-rich tracts occupy residues 1380-1398 (TGEPGPSGPPGKRGPPGPA) and 1454-1469 (SPGPDGPPGPMGPPGL). 2 positions are modified to hydroxyproline: Pro-1467 and Pro-1470. The segment covering 1485 to 1494 (PGLIGLIGPP) has biased composition (low complexity). The span at 1526–1541 (PIGPPGPPGLPGPPGP) shows a compositional bias: pro residues. The segment covering 1542–1554 (KGAKGSSGPTGPK) has biased composition (low complexity). A compositionally biased stretch (pro residues) spans 1560-1569 (PGPPGPPGPP). The segment at 1571 to 1605 (EVIQPLPIQASRTRRNIDASQLLDDGNGENYVDYA) is nonhelical region. A sulfotyrosine mark is found at Tyr-1601 and Tyr-1604. A propeptide spans 1606 to 1838 (DGMEEIFGSL…FEVGPACFMG (233 aa)) (C-terminal propeptide). The Fibrillar collagen NC1 domain occupies 1609-1837 (EEIFGSLNSL…GFEVGPACFM (229 aa)). 3 disulfides stabilise this stretch: Cys-1639–Cys-1671, Cys-1680–Cys-1835, and Cys-1746–Cys-1789. Positions 1657, 1659, 1660, 1662, and 1665 each coordinate Ca(2+).

The protein belongs to the fibrillar collagen family. As to quaternary structure, trimers of two alpha 1(V) and one alpha 2(V) chains in most tissues and trimers of one alpha 1(V), one alpha 2(V), and one alpha 3(V) chains in placenta. Interacts with CSPG4. Prolines at the third position of the tripeptide repeating unit (G-X-Y) are hydroxylated in some or all of the chains. In terms of processing, sulfated on 40% of tyrosines.

It localises to the secreted. The protein resides in the extracellular space. It is found in the extracellular matrix. Its function is as follows. Type V collagen is a member of group I collagen (fibrillar forming collagen). It is a minor connective tissue component of nearly ubiquitous distribution. Type V collagen binds to DNA, heparan sulfate, thrombospondin, heparin, and insulin. This chain is Collagen alpha-1(V) chain (COL5A1), found in Homo sapiens (Human).